The sequence spans 131 residues: Arsenate reductase (131 aa).

Active-site nucleophile residues include Cys10, Cys82, and Cys89. 2 disulfides stabilise this stretch: Cys10-Cys82 and Cys82-Cys89.

The protein belongs to the low molecular weight phosphotyrosine protein phosphatase family. Thioredoxin-coupled ArsC subfamily.

The protein resides in the cytoplasm. It catalyses the reaction arsenate + [thioredoxin]-dithiol + H(+) = arsenite + [thioredoxin]-disulfide + H2O. Catalyzes the reduction of arsenate [As(V)] to arsenite [As(III)]. The polypeptide is Arsenate reductase (Staphylococcus aureus (strain N315)).